The primary structure comprises 156 residues: Putative HTH-type transcriptional regulator BadM (156 aa).

One can recognise an HTH rrf2-type domain in the interval 4–130 (RLQKSTMCGL…RSVSITSLLK (127 aa)). Residues 136–156 (RRKTERGPNGASARHSSAGRA) are disordered. Residues 145-156 (GASARHSSAGRA) are compositionally biased toward low complexity.

The sequence is that of Putative HTH-type transcriptional regulator BadM (badM) from Rhodopseudomonas palustris (strain ATCC BAA-98 / CGA009).